A 237-amino-acid polypeptide reads, in one-letter code: tRNA(His) guanylyltransferase (237 aa).

Mg(2+)-binding residues include D29, G30, and D77. Residues D29–H34 and S76–D77 each bind GTP.

It belongs to the tRNA(His) guanylyltransferase family. The cofactor is Mg(2+).

The enzyme catalyses a 5'-end ribonucleotide-tRNA(His) + GTP + ATP + H2O = a 5'-end phospho-guanosine-ribonucleotide-tRNA(His) + AMP + 2 diphosphate + H(+). Functionally, adds a GMP to the 5'-end of tRNA(His) after transcription and RNase P cleavage. The sequence is that of tRNA(His) guanylyltransferase (THG1) from Eremothecium gossypii (strain ATCC 10895 / CBS 109.51 / FGSC 9923 / NRRL Y-1056) (Yeast).